A 413-amino-acid polypeptide reads, in one-letter code: Chemotactic signal transduction system substrate-binding protein BasB (413 aa).

The signal sequence occupies residues 1–31 (MHSTTRREWLGAIGATAATGLAGCAGVGGAG).

It is found in the cell membrane. In terms of biological role, mediates chemotaxis towards five attractant amino acids (leucine, isoleucine, valine, methionine and cysteine). May function as a receptor that binds the amino acids and transduces a signal to BasT. Has probably no additional role in transport. The sequence is that of Chemotactic signal transduction system substrate-binding protein BasB (basB) from Halobacterium salinarum (strain ATCC 29341 / DSM 671 / R1).